The sequence spans 490 residues: Myocilin (490 aa).

The first 18 residues, 1–18, serve as a signal peptide directing secretion; the sequence is MPAVQLLLLACLLGGVGA. The stretch at 51 to 170 forms a coiled coil; sequence GQAMLAIQEL…QEVASLRRGQ (120 aa). The disordered stretch occupies residues 152 to 186; that stretch reads LARRLESSSQEVASLRRGQCPQAHSSSQDVPSGSR. Positions 173–182 are enriched in polar residues; sequence QAHSSSQDVP. The region spanning 230-489 is the Olfactomedin-like domain; that stretch reads GCGELVWVGE…MVSYDIKLSR (260 aa). Cys231 and Cys419 are disulfide-bonded. Ca(2+) contacts are provided by Asp366, Asn414, Ala415, Ile463, and Asp464. Residues 488–490 carry the Microbody targeting signal motif; it reads SRL.

Homodimer (via N-terminus). Can also form higher oligomers. Interacts with OLFM3, FN1, NRCAM, GLDN and NFASC. Interacts (via N-terminus) with MYL2. Interacts with SFRP1, FRZB, FZD7, FZD10, FZD1 and WIF1; regulates Wnt signaling. Interacts with SNTA1; regulates muscle hypertrophy. Interacts with ERBB2 and ERBB3; activates ERBB2-ERBB3 signaling pathway. Interacts with SNCG; affects its secretion and its aggregation. In terms of processing, palmitoylated. Post-translationally, undergoes a calcium-dependent proteolytic cleavage at Gln-212 by CAPN2 in the endoplasmic reticulum. The result is the production of two fragments, one of 35 kDa containing the C-terminal olfactomedin-like domain, and another of 20 kDa containing the N-terminal leucine zipper-like domain. Glycosylated. In terms of tissue distribution, the myocilin 35 kDa fragment is detected in iris and ciliary body.

It is found in the secreted. It localises to the golgi apparatus. The protein localises to the cytoplasmic vesicle. The protein resides in the extracellular space. Its subcellular location is the extracellular matrix. It is found in the extracellular exosome. It localises to the mitochondrion. The protein localises to the mitochondrion intermembrane space. The protein resides in the mitochondrion inner membrane. Its subcellular location is the mitochondrion outer membrane. It is found in the rough endoplasmic reticulum. It localises to the cell projection. The protein localises to the cilium. The protein resides in the endoplasmic reticulum. Secreted glycoprotein regulating the activation of different signaling pathways in adjacent cells to control different processes including cell adhesion, cell-matrix adhesion, cytoskeleton organization and cell migration. Promotes substrate adhesion, spreading and formation of focal contacts. Negatively regulates cell-matrix adhesion and stress fiber assembly through Rho protein signal transduction. Modulates the organization of actin cytoskeleton by stimulating the formation of stress fibers through interactions with components of Wnt signaling pathways. Promotes cell migration through activation of PTK2 and the downstream phosphatidylinositol 3-kinase signaling. Plays a role in bone formation and promotes osteoblast differentiation in a dose-dependent manner through mitogen-activated protein kinase signaling. Mediates myelination in the peripheral nervous system through ERBB2/ERBB3 signaling. Plays a role as a regulator of muscle hypertrophy through the components of dystrophin-associated protein complex. Involved in positive regulation of mitochondrial depolarization. Plays a role in neurite outgrowth. May participate in the obstruction of fluid outflow in the trabecular meshwork. This Bos taurus (Bovine) protein is Myocilin (MYOC).